Here is a 404-residue protein sequence, read N- to C-terminus: MLYYFFKYIDRFSHIPGIGVFKYISFRAASAAILSLCISIFLGKRLIIFFKTAQIKEGIRELDLAGQSEKAHIPTMGGIIIIAATVVPTLLFAKLKNVYIMLLLISIIWMGLIGFIDDYIKVFKRDKKGLAGKFKIVGQVALGVIVGITLIFRDDVVIREFGSNITVIENGQVTINDYKDVKTVKTTIPFLKNNELDYSKLIPWLDSKYMWIVYVLFMIFIIAAVSNGANLTDGLDGLTAGTSAIIGTTLAILAYVSGNVIFSRYLNIMYIPNLAELAIFCTAFVGACVGFLWYNTYPAQIFMGDTGSLAIGSVIAVLAIVIRKELMIPLLCGIFFIETLSVIIQVGYFKYTKYRYGIGKRMFKMAPLHHHFQKLGFHESKIVTRFWIVGIVLAILSLVTLKLR.

The next 10 membrane-spanning stretches (helical) occupy residues 30–50, 73–93, 100–120, 132–152, 209–229, 242–262, 274–294, 301–321, 326–346, and 381–401; these read SAAI…IIFF, IPTM…LLFA, IMLL…DDYI, GKFK…TLIF, YMWI…SNGA, TSAI…NVIF, LAEL…FLWY, IFMG…LAIV, LMIP…IIQV, and KIVT…LVTL.

This sequence belongs to the glycosyltransferase 4 family. MraY subfamily. Mg(2+) serves as cofactor.

The protein localises to the cell inner membrane. It carries out the reaction UDP-N-acetyl-alpha-D-muramoyl-L-alanyl-gamma-D-glutamyl-meso-2,6-diaminopimeloyl-D-alanyl-D-alanine + di-trans,octa-cis-undecaprenyl phosphate = di-trans,octa-cis-undecaprenyl diphospho-N-acetyl-alpha-D-muramoyl-L-alanyl-D-glutamyl-meso-2,6-diaminopimeloyl-D-alanyl-D-alanine + UMP. It participates in cell wall biogenesis; peptidoglycan biosynthesis. Functionally, catalyzes the initial step of the lipid cycle reactions in the biosynthesis of the cell wall peptidoglycan: transfers peptidoglycan precursor phospho-MurNAc-pentapeptide from UDP-MurNAc-pentapeptide onto the lipid carrier undecaprenyl phosphate, yielding undecaprenyl-pyrophosphoryl-MurNAc-pentapeptide, known as lipid I. In Amoebophilus asiaticus (strain 5a2), this protein is Phospho-N-acetylmuramoyl-pentapeptide-transferase.